The sequence spans 194 residues: Glycerol-3-phosphate acyltransferase (194 aa).

5 helical membrane-spanning segments follow: residues 3–23, 47–67, 78–97, 112–132, and 153–173; these read IALL…LIVG, VLGK…GVLP, IHGI…PIYL, ILGV…TLLF, and LFFD…LIII.

This sequence belongs to the PlsY family. As to quaternary structure, probably interacts with PlsX.

It is found in the cell membrane. It carries out the reaction an acyl phosphate + sn-glycerol 3-phosphate = a 1-acyl-sn-glycero-3-phosphate + phosphate. The protein operates within lipid metabolism; phospholipid metabolism. In terms of biological role, catalyzes the transfer of an acyl group from acyl-phosphate (acyl-PO(4)) to glycerol-3-phosphate (G3P) to form lysophosphatidic acid (LPA). This enzyme utilizes acyl-phosphate as fatty acyl donor, but not acyl-CoA or acyl-ACP. This chain is Glycerol-3-phosphate acyltransferase, found in Macrococcus caseolyticus (strain JCSC5402) (Macrococcoides caseolyticum).